Here is an 86-residue protein sequence, read N- to C-terminus: Translation initiation factor IF-1 2 (86 aa).

The S1-like domain maps to 1-72; the sequence is MAKEELLEME…TKARISFRHK (72 aa).

This sequence belongs to the IF-1 family. Component of the 30S ribosomal translation pre-initiation complex which assembles on the 30S ribosome in the order IF-2 and IF-3, IF-1 and N-formylmethionyl-tRNA(fMet); mRNA recruitment can occur at any time during PIC assembly.

It localises to the cytoplasm. Its function is as follows. One of the essential components for the initiation of protein synthesis. Stabilizes the binding of IF-2 and IF-3 on the 30S subunit to which N-formylmethionyl-tRNA(fMet) subsequently binds. Helps modulate mRNA selection, yielding the 30S pre-initiation complex (PIC). Upon addition of the 50S ribosomal subunit IF-1, IF-2 and IF-3 are released leaving the mature 70S translation initiation complex. The polypeptide is Translation initiation factor IF-1 2 (Aromatoleum aromaticum (strain DSM 19018 / LMG 30748 / EbN1) (Azoarcus sp. (strain EbN1))).